The chain runs to 892 residues: Alanine--tRNA ligase (892 aa).

Positions 574, 578, 677, and 681 each coordinate Zn(2+).

The protein belongs to the class-II aminoacyl-tRNA synthetase family. Zn(2+) serves as cofactor.

It is found in the cytoplasm. The enzyme catalyses tRNA(Ala) + L-alanine + ATP = L-alanyl-tRNA(Ala) + AMP + diphosphate. Functionally, catalyzes the attachment of alanine to tRNA(Ala) in a two-step reaction: alanine is first activated by ATP to form Ala-AMP and then transferred to the acceptor end of tRNA(Ala). Also edits incorrectly charged Ser-tRNA(Ala) and Gly-tRNA(Ala) via its editing domain. The polypeptide is Alanine--tRNA ligase (Mesoplasma florum (strain ATCC 33453 / NBRC 100688 / NCTC 11704 / L1) (Acholeplasma florum)).